A 130-amino-acid polypeptide reads, in one-letter code: Small ribosomal subunit protein uS9 (130 aa).

Belongs to the universal ribosomal protein uS9 family.

In Bacillus cytotoxicus (strain DSM 22905 / CIP 110041 / 391-98 / NVH 391-98), this protein is Small ribosomal subunit protein uS9.